Reading from the N-terminus, the 293-residue chain is NAD kinase (293 aa).

Catalysis depends on aspartate 73, which acts as the Proton acceptor. NAD(+)-binding positions include 73–74 (DG), 147–148 (NE), histidine 158, arginine 175, aspartate 177, 188–193 (TAYSLS), and glutamine 248.

Belongs to the NAD kinase family. The cofactor is a divalent metal cation.

The protein localises to the cytoplasm. The enzyme catalyses NAD(+) + ATP = ADP + NADP(+) + H(+). Its function is as follows. Involved in the regulation of the intracellular balance of NAD and NADP, and is a key enzyme in the biosynthesis of NADP. Catalyzes specifically the phosphorylation on 2'-hydroxyl of the adenosine moiety of NAD to yield NADP. The sequence is that of NAD kinase from Photobacterium profundum (strain SS9).